Reading from the N-terminus, the 515-residue chain is Chromosomal replication initiator protein DnaA (515 aa).

Residues 1-89 are domain I, interacts with DnaA modulators; that stretch reads MVADQAVLSS…LLAISIDANL (89 aa). The interval 89–172 is domain II; it reads LQPPRTPSSE…APPSTSAETS (84 aa). Disordered stretches follow at residues 90-130 and 142-171; these read QPPR…SRRA and PPAD…SAET. 2 stretches are compositionally biased toward low complexity: residues 102-114 and 143-160; these read SSLA…AAAP and PADV…NGKP. The domain III, AAA+ region stretch occupies residues 173–389; it reads RLNDRYHFET…GALIRVTAFA (217 aa). The ATP site is built by Gly217, Gly219, Lys220, and Thr221. The tract at residues 390-515 is domain IV, binds dsDNA; the sequence is SLNRQTVDIE…NEIKRKQRGA (126 aa).

It belongs to the DnaA family. As to quaternary structure, oligomerizes as a right-handed, spiral filament on DNA at oriC.

The protein resides in the cytoplasm. Its function is as follows. Plays an essential role in the initiation and regulation of chromosomal replication. ATP-DnaA binds to the origin of replication (oriC) to initiate formation of the DNA replication initiation complex once per cell cycle. Binds the DnaA box (a 9 base pair repeat at the origin) and separates the double-stranded (ds)DNA. Forms a right-handed helical filament on oriC DNA; dsDNA binds to the exterior of the filament while single-stranded (ss)DNA is stabiized in the filament's interior. The ATP-DnaA-oriC complex binds and stabilizes one strand of the AT-rich DNA unwinding element (DUE), permitting loading of DNA polymerase. After initiation quickly degrades to an ADP-DnaA complex that is not apt for DNA replication. Binds acidic phospholipids. In Micrococcus luteus (strain ATCC 4698 / DSM 20030 / JCM 1464 / CCM 169 / CCUG 5858 / IAM 1056 / NBRC 3333 / NCIMB 9278 / NCTC 2665 / VKM Ac-2230) (Micrococcus lysodeikticus), this protein is Chromosomal replication initiator protein DnaA.